A 240-amino-acid polypeptide reads, in one-letter code: Ribonuclease PH (240 aa).

Phosphate-binding positions include Arg87 and 125–127 (GTR).

Belongs to the RNase PH family. In terms of assembly, homohexameric ring arranged as a trimer of dimers.

The enzyme catalyses tRNA(n+1) + phosphate = tRNA(n) + a ribonucleoside 5'-diphosphate. Phosphorolytic 3'-5' exoribonuclease that plays an important role in tRNA 3'-end maturation. Removes nucleotide residues following the 3'-CCA terminus of tRNAs; can also add nucleotides to the ends of RNA molecules by using nucleoside diphosphates as substrates, but this may not be physiologically important. Probably plays a role in initiation of 16S rRNA degradation (leading to ribosome degradation) during starvation. The chain is Ribonuclease PH from Dictyoglomus turgidum (strain DSM 6724 / Z-1310).